The chain runs to 255 residues: Triosephosphate isomerase (255 aa).

9 to 11 contacts substrate; it reads NWK. Catalysis depends on His-95, which acts as the Electrophile. Glu-167 (proton acceptor) is an active-site residue. Substrate contacts are provided by residues Gly-173, Ser-212, and 233-234; that span reads GG.

Belongs to the triosephosphate isomerase family. As to quaternary structure, homodimer.

Its subcellular location is the cytoplasm. The enzyme catalyses D-glyceraldehyde 3-phosphate = dihydroxyacetone phosphate. It participates in carbohydrate biosynthesis; gluconeogenesis. The protein operates within carbohydrate degradation; glycolysis; D-glyceraldehyde 3-phosphate from glycerone phosphate: step 1/1. Its function is as follows. Involved in the gluconeogenesis. Catalyzes stereospecifically the conversion of dihydroxyacetone phosphate (DHAP) to D-glyceraldehyde-3-phosphate (G3P). This is Triosephosphate isomerase from Photorhabdus laumondii subsp. laumondii (strain DSM 15139 / CIP 105565 / TT01) (Photorhabdus luminescens subsp. laumondii).